The chain runs to 365 residues: Alanine racemase (365 aa).

The active-site Proton acceptor; specific for D-alanine is Lys32. Lys32 bears the N6-(pyridoxal phosphate)lysine mark. Residue Arg128 participates in substrate binding. Tyr257 (proton acceptor; specific for L-alanine) is an active-site residue. Met305 is a substrate binding site.

Belongs to the alanine racemase family. The cofactor is pyridoxal 5'-phosphate.

It catalyses the reaction L-alanine = D-alanine. The protein operates within amino-acid biosynthesis; D-alanine biosynthesis; D-alanine from L-alanine: step 1/1. Functionally, catalyzes the interconversion of L-alanine and D-alanine. May also act on other amino acids. The chain is Alanine racemase (alr) from Francisella tularensis subsp. holarctica (strain OSU18).